The following is a 59-amino-acid chain: Ferredoxin-2 (59 aa).

4Fe-4S ferredoxin-type domains are found at residues 3 to 32 and 33 to 59; these read YSVI…LQNG and KAVP…AIVE. [4Fe-4S] cluster-binding residues include Cys12, Cys15, Cys18, Cys22, Cys42, Cys45, Cys48, and Cys52.

As to quaternary structure, homodimer. Requires [4Fe-4S] cluster as cofactor.

It is found in the periplasm. Ferredoxins are iron-sulfur proteins that transfer electrons in a wide variety of metabolic reactions. In Desulfomicrobium norvegicum (strain DSM 1741 / NCIMB 8310) (Desulfovibrio baculatus (strain Norway 4)), this protein is Ferredoxin-2.